The primary structure comprises 305 residues: Acyl transferase (305 aa).

Catalysis depends on charge relay system residues Ser116, Asp213, and His243.

Belongs to the LuxD family.

The protein operates within lipid metabolism; fatty acid reduction for biolumincescence. Its function is as follows. Acyl transferase is part of the fatty acid reductase system required for aldehyde biosynthesis; it produces fatty acids for the luminescent reaction. The sequence is that of Acyl transferase from Shewanella woodyi (strain ATCC 51908 / MS32).